A 349-amino-acid chain; its full sequence is Flagellar P-ring protein (349 aa).

A signal peptide spans 1–16 (MKYFFIIALLLSSLYS).

It belongs to the FlgI family. The basal body constitutes a major portion of the flagellar organelle and consists of four rings (L,P,S, and M) mounted on a central rod.

The protein resides in the periplasm. It is found in the bacterial flagellum basal body. Assembles around the rod to form the L-ring and probably protects the motor/basal body from shearing forces during rotation. This is Flagellar P-ring protein from Aliarcobacter butzleri (strain RM4018) (Arcobacter butzleri).